The sequence spans 313 residues: Cytosolic Fe-S cluster assembly factor NUBP1 homolog (313 aa).

The segment at 1 to 25 (MSDVPDDANAGCPGTGSAGAGKASG) is disordered. [4Fe-4S] cluster is bound by residues C12, C26, C29, and C35. 66–73 (GKGGVGKS) contributes to the ATP binding site. The [4Fe-4S] cluster site is built by C240 and C243.

It belongs to the Mrp/NBP35 ATP-binding proteins family. NUBP1/NBP35 subfamily. In terms of assembly, heterotetramer of 2 NUBP1 and 2 NUBP2 chains. The cofactor is [4Fe-4S] cluster. In terms of tissue distribution, expressed in head amphid and labial ciliated sensory neurons and tail phasmid ciliated chemosensory neurons.

The protein resides in the cytoplasm. It is found in the cell projection. Its function is as follows. Component of the cytosolic iron-sulfur (Fe/S) protein assembly (CIA) machinery. Required for maturation of extramitochondrial Fe-S proteins. The NUBP1-NUBP2 heterotetramer forms a Fe-S scaffold complex, mediating the de novo assembly of an Fe-S cluster and its transfer to target apoproteins. Regulates cilium formation and structure. The chain is Cytosolic Fe-S cluster assembly factor NUBP1 homolog from Caenorhabditis elegans.